We begin with the raw amino-acid sequence, 76 residues long: Secreted RxLR effector protein 31 (76 aa).

Positions M1–C24 are cleaved as a signal peptide. A RxLR-dEER motif is present at residues R49–R64. N54 carries an N-linked (GlcNAc...) asparagine glycan.

The protein belongs to the RxLR effector family.

It localises to the secreted. Its subcellular location is the host nucleus. The protein localises to the host cytoplasm. Secreted effector that dos not suppress the host cell death induced by cell death-inducing proteins. This is Secreted RxLR effector protein 31 from Plasmopara viticola (Downy mildew of grapevine).